The sequence spans 945 residues: Endo-1,4-beta-xylanase 1 (945 aa).

Residues 16–41 are compositionally biased toward basic and acidic residues; sequence NGDRNPDKKSRESMEVSRKDNEEPEK. Residues 16 to 50 are disordered; it reads NGDRNPDKKSRESMEVSRKDNEEPEKQNNNNVASI. CBM-cenC domains are found at residues 57–197, 227–362, and 397–541; these read NVIV…EGPS, IVVN…IEGP, and NILT…GPSS. Asn-86, Asn-239, Asn-305, Asn-349, Asn-417, Asn-453, and Asn-687 each carry an N-linked (GlcNAc...) asparagine glycan. The 296-residue stretch at 589-884 folds into the GH10 domain; that stretch reads SGASVRVRQI…NEAGKRFLAV (296 aa). Residue Glu-718 is the Proton donor of the active site. The Nucleophile role is filled by Glu-819.

It belongs to the glycosyl hydrolase 10 (cellulase F) family. Predominantly expressed in vascular bundles, but not in vessel cells. Mostly expressed in stems, at lower levels in roots, and weakly in inflorescences and seedlings.

The protein resides in the secreted. Its subcellular location is the cell wall. The enzyme catalyses Endohydrolysis of (1-&gt;4)-beta-D-xylosidic linkages in xylans.. It functions in the pathway glycan degradation; xylan degradation. Its function is as follows. Binds to and hydrolyzes insoluble and soluble xylan substrates. Exhibits xylanase activity. This is Endo-1,4-beta-xylanase 1 from Arabidopsis thaliana (Mouse-ear cress).